We begin with the raw amino-acid sequence, 354 residues long: Methylthioribose-1-phosphate isomerase (354 aa).

Substrate-binding positions include 54 to 56 (RGA), Arg-97, and Gln-204. The Proton donor role is filled by Asp-245. Position 255-256 (255-256 (NK)) interacts with substrate.

Belongs to the eIF-2B alpha/beta/delta subunits family. MtnA subfamily.

It carries out the reaction 5-(methylsulfanyl)-alpha-D-ribose 1-phosphate = 5-(methylsulfanyl)-D-ribulose 1-phosphate. It participates in amino-acid biosynthesis; L-methionine biosynthesis via salvage pathway; L-methionine from S-methyl-5-thio-alpha-D-ribose 1-phosphate: step 1/6. Catalyzes the interconversion of methylthioribose-1-phosphate (MTR-1-P) into methylthioribulose-1-phosphate (MTRu-1-P). The sequence is that of Methylthioribose-1-phosphate isomerase from Albidiferax ferrireducens (strain ATCC BAA-621 / DSM 15236 / T118) (Rhodoferax ferrireducens).